Consider the following 351-residue polypeptide: Histidinol-phosphate aminotransferase (351 aa).

Lys-221 carries the N6-(pyridoxal phosphate)lysine modification.

This sequence belongs to the class-II pyridoxal-phosphate-dependent aminotransferase family. Histidinol-phosphate aminotransferase subfamily. Homodimer. The cofactor is pyridoxal 5'-phosphate.

The catalysed reaction is L-histidinol phosphate + 2-oxoglutarate = 3-(imidazol-4-yl)-2-oxopropyl phosphate + L-glutamate. Its pathway is amino-acid biosynthesis; L-histidine biosynthesis; L-histidine from 5-phospho-alpha-D-ribose 1-diphosphate: step 7/9. The protein is Histidinol-phosphate aminotransferase of Staphylococcus haemolyticus (strain JCSC1435).